Here is a 375-residue protein sequence, read N- to C-terminus: Response regulator aspartate phosphatase E (375 aa).

The stretch at 24–95 forms a coiled coil; the sequence is NVTDAEMLKA…HKKKLDNMRA (72 aa). 6 TPR repeats span residues 96 to 129, 177 to 210, 219 to 252, 258 to 291, 297 to 330, and 333 to 366; these read YYYNFFRGMYEFRNGEYTRAITYYKKAERKIPTI, IQCHFVIAGNYDDLENHEKALPHLQEALKGAELL, ATAFFNLGNCYHKMDNLNKAARYIEQALVQYRKI, PQAYHDLALIYFKQGKKEQAMDCFRKGIRSAVDF, MNLFEALDVLYIRNGDTPKLLNIFSRLENGKGYP, and EELALLGGNLFDYNGKIEDSIICFKKMVYAQKQI.

It belongs to the Rap family.

Its subcellular location is the cytoplasm. Phosphatase activity is inhibited by the phosphatase regulator PhrE. In terms of biological role, involved in the regulation of sporulation. Acts as a phosphatase that specifically dephosphorylates the sporulation initiation phosphotransferase Spo0F and inhibits its activity. Probably plays a dispensable role in the overall context of sporulation initiation. This chain is Response regulator aspartate phosphatase E (rapE), found in Bacillus subtilis (strain 168).